The chain runs to 126 residues: MFESFVNEGTAFLLFAKDERIRFKHDKYKALPIDVRNAEGNVPLHSCRGLSISFKFFHNVAFLSCWILVFKRSKGCNATADVSPPKKPPIKCDEFLGLVACSVMYAASQIVYLLVVPAVLFAFLLV.

This is an uncharacterized protein from Saccharomyces cerevisiae (strain ATCC 204508 / S288c) (Baker's yeast).